Consider the following 143-residue polypeptide: Nucleoside diphosphate kinase (143 aa).

Lys11, Phe59, Arg87, Thr93, Arg104, and Asn114 together coordinate ATP. His117 functions as the Pros-phosphohistidine intermediate in the catalytic mechanism.

The protein belongs to the NDK family. In terms of assembly, homotetramer. Mg(2+) is required as a cofactor.

The protein resides in the cytoplasm. The enzyme catalyses a 2'-deoxyribonucleoside 5'-diphosphate + ATP = a 2'-deoxyribonucleoside 5'-triphosphate + ADP. The catalysed reaction is a ribonucleoside 5'-diphosphate + ATP = a ribonucleoside 5'-triphosphate + ADP. Functionally, major role in the synthesis of nucleoside triphosphates other than ATP. The ATP gamma phosphate is transferred to the NDP beta phosphate via a ping-pong mechanism, using a phosphorylated active-site intermediate. The chain is Nucleoside diphosphate kinase from Azotobacter vinelandii (strain DJ / ATCC BAA-1303).